We begin with the raw amino-acid sequence, 434 residues long: Pre-B-cell leukemia transcription factor 3 (434 aa).

The tract at residues 20 to 41 is disordered; sequence SVQGGMALPPPPHGHEGADGDG. Positions 32 to 41 are enriched in basic and acidic residues; it reads HGHEGADGDG. The PBC domain occupies 41-234; it reads GRKQDIGDIL…VMILRSRFLD (194 aa). Residues 48 to 127 are PBC-A; it reads DILHQIMTIT…EGVSGPEKGG (80 aa). The tract at residues 130–234 is PBC-B; sequence AAAAAAAAAS…VMILRSRFLD (105 aa). Positions 235-297 form a DNA-binding region, homeobox; TALE-type; that stretch reads ARRKRRNFSK…NKRIRYKKNI (63 aa). Positions 326 to 341 are enriched in low complexity; it reads NQTNSPTTPNSGSSGS. Disordered stretches follow at residues 326–349 and 403–434; these read NQTN…NSGD and LNAN…DTSN. Over residues 403 to 422 the composition is skewed to polar residues; sequence LNANGGWQDATTPSSVTSPT.

Belongs to the TALE/PBX homeobox family. Interacts with PBXIP1. Ubiquitously expressed.

The protein resides in the nucleus. Functionally, transcriptional activator that binds the sequence 5'-ATCAATCAA-3'. This is Pre-B-cell leukemia transcription factor 3 (PBX3) from Homo sapiens (Human).